A 239-amino-acid chain; its full sequence is Small ribosomal subunit protein uS2c (239 aa).

This sequence belongs to the universal ribosomal protein uS2 family.

The protein resides in the plastid. The chain is Small ribosomal subunit protein uS2c (rps2) from Aneura mirabilis (Parasitic liverwort).